The following is a 542-amino-acid chain: Calcium-dependent protein kinase 7 (542 aa).

A lipid anchor (N-myristoyl glycine) is attached at Gly2. Residues 79-337 enclose the Protein kinase domain; that stretch reads YIIGRKLGQG…AHEVLRHPWI (259 aa). Residues 85 to 93 and Lys108 each bind ATP; that span reads LGQGQFGTT. Catalysis depends on Asp203, which acts as the Proton acceptor. The segment at 343 to 373 is autoinhibitory domain; it reads ATDQALDPSVISRLKQFSAMNKLKKLALRVI. Positions 380 to 415 constitute an EF-hand 1 domain; it reads EEIAGLREMFKAVDTKNRGVITFGELREGLRRFGAE. Ca(2+) contacts are provided by Asp393, Glu404, Asp431, Asn433, Thr435, Glu440, Asp465, Asp467, Ser469, Tyr471, Lys476, Asp499, Asn501, Asp503, Gln505, and Glu510. In terms of domain architecture, EF-hand 2; degenerate spans 416-451; that stretch reads FKDTEIGDIMEAAHNDNNVTIHYEEFIAATLPLNKI. 2 EF-hand domains span residues 452–487 and 488–521; these read EREEHLLAAFTYFDKDGSGYITVDKLQRACGEHNME and DSLLEEIISEVDQNNDGQIDYAEFVAMMQGSNVG.

Belongs to the protein kinase superfamily. Ser/Thr protein kinase family. CDPK subfamily. In terms of tissue distribution, expressed in roots. Expressed in leaf sheaths.

The protein localises to the membrane. It localises to the cytoplasm. It is found in the cytosol. The catalysed reaction is L-seryl-[protein] + ATP = O-phospho-L-seryl-[protein] + ADP + H(+). It carries out the reaction L-threonyl-[protein] + ATP = O-phospho-L-threonyl-[protein] + ADP + H(+). With respect to regulation, activated by calcium. Autophosphorylation may play an important role in the regulation of the kinase activity. In terms of biological role, may play a role in signal transduction pathways that involve calcium as a second messenger. May be a signaling component in the response to gibberellin and cold stress. This is Calcium-dependent protein kinase 7 from Oryza sativa subsp. japonica (Rice).